Here is a 513-residue protein sequence, read N- to C-terminus: NAD(P)H-quinone oxidoreductase subunit 2, chloroplastic (513 aa).

The next 14 helical transmembrane spans lie at asparagine 11–isoleucine 31, serine 38–phenylalanine 58, glycine 78–serine 98, phenylalanine 112–leucine 132, valine 133–alanine 153, leucine 167–leucine 187, phenylalanine 219–isoleucine 239, proline 256–threonine 276, tryptophan 290–alanine 310, methionine 318–asparagine 338, tyrosine 348–leucine 368, alanine 389–phenylalanine 409, histidine 422–leucine 442, and leucine 478–isoleucine 498.

Belongs to the complex I subunit 2 family. As to quaternary structure, NDH is composed of at least 16 different subunits, 5 of which are encoded in the nucleus.

Its subcellular location is the plastid. The protein resides in the chloroplast thylakoid membrane. It catalyses the reaction a plastoquinone + NADH + (n+1) H(+)(in) = a plastoquinol + NAD(+) + n H(+)(out). The enzyme catalyses a plastoquinone + NADPH + (n+1) H(+)(in) = a plastoquinol + NADP(+) + n H(+)(out). Its function is as follows. NDH shuttles electrons from NAD(P)H:plastoquinone, via FMN and iron-sulfur (Fe-S) centers, to quinones in the photosynthetic chain and possibly in a chloroplast respiratory chain. The immediate electron acceptor for the enzyme in this species is believed to be plastoquinone. Couples the redox reaction to proton translocation, and thus conserves the redox energy in a proton gradient. The polypeptide is NAD(P)H-quinone oxidoreductase subunit 2, chloroplastic (Staurastrum punctulatum (Green alga)).